Reading from the N-terminus, the 165-residue chain is MTDATPRRSAYSRLLDRAMRILAMRDHSEQELRRKLGAVLPGKNEEEQEQATPEDIEKVIAWCHEQHYLDDARFAERYIASRGRKGYGPQRIRQELQQKGISRNACDSAFADCEVDWEQQARDQAERKFGAPLPRTFPEKAKVQRFLLYRGYYMEDIQAIYRNFE.

Belongs to the RecX family.

The protein localises to the cytoplasm. Modulates RecA activity. The sequence is that of Regulatory protein RecX from Cronobacter sakazakii (strain ATCC BAA-894) (Enterobacter sakazakii).